Reading from the N-terminus, the 240-residue chain is MGNTQPLPILITGGGRRIGLALAWHFINQKQPVIVSYRTHYPAIDGLINAGAQCIQADFSTNDGVMAFADEVLKSTHGLRAILHNASAWMAEKPGAPLADVLACMMQIHVNTPYLLNHALERLLRGHGHAASDIIHFTDYVVERGSDKHIAYAASKAALDNMTRSFARKLAPEVKVNSIAPSLILFNEHDDAEYRQQALNKSLMKTAPGEKEVIDLVDYLLTSCFVTGRSFPLDGGRHLR.

The Proton acceptor role is filled by Tyr-152.

This sequence belongs to the short-chain dehydrogenases/reductases (SDR) family. FolM subfamily.

It carries out the reaction (6S)-5,6,7,8-tetrahydrofolate + NADP(+) = 7,8-dihydrofolate + NADPH + H(+). The catalysed reaction is 7,8-dihydromonapterin + NADPH + H(+) = 5,6,7,8-tetrahydromonapterin + NADP(+). Functionally, catalyzes the reduction of dihydromonapterin to tetrahydromonapterin. Also has lower activity with dihydrofolate. The chain is Dihydromonapterin reductase (folM) from Escherichia coli O139:H28 (strain E24377A / ETEC).